A 328-amino-acid chain; its full sequence is MNLVNLENILDNTSFLVLFLTMMIYWVGAAFPSVPYLQALGTAGVAIANLCIAALLGARWIEAGYFPISNLYESLFFLAWGVTAAHLIAQQMSRSHLVGVVTTPVAMGISAFAALTLPADMQTSAPLVPALKSNWLMMHVSVMMLSYATLMVGSALAIAFLFVTKGQNVELHGSSVGTGGYRTGVRLNKPQPVQETAIEGSGNVAVLNTTVVSDAPSLSLQRLSIADTLDNISYRIIGLGFPLLTIGIIAGAVWANEAWGSYWSWDPKETWALITWLVFAAYLHARITKGWQGRKPAILAASGFVVVWVCYLGVNLLGKGLHSYGWFF.

The next 8 membrane-spanning stretches (helical) occupy residues 15-35 (FLVLFLTMMIYWVGAAFPSVP), 37-57 (LQALGTAGVAIANLCIAALLG), 68-88 (ISNLYESLFFLAWGVTAAHLI), 97-117 (LVGVVTTPVAMGISAFAALTL), 142-162 (VMMLSYATLMVGSALAIAFLF), 236-256 (IIGLGFPLLTIGIIAGAVWAN), 271-291 (WALITWLVFAAYLHARITKGW), and 297-317 (AILAASGFVVVWVCYLGVNLL).

The protein belongs to the CcmF/CycK/Ccl1/NrfE/CcsA family. In terms of assembly, may interact with ccs1.

The protein resides in the cellular thylakoid membrane. Required during biogenesis of c-type cytochromes (cytochrome c6 and cytochrome f) at the step of heme attachment. In Gloeothece citriformis (strain PCC 7424) (Cyanothece sp. (strain PCC 7424)), this protein is Cytochrome c biogenesis protein CcsA.